The chain runs to 178 residues: Caveolin-1 (178 aa).

Position 2 is an N-acetylserine (Ser2). Ser2 carries the post-translational modification Phosphoserine. The interval 2-94 (SGGKYVDSEG…WKASFTTFTV (93 aa)) is required for homooligomerization. The Cytoplasmic portion of the chain corresponds to 2–104 (SGGKYVDSEG…TKYWFYRLLS (103 aa)). Lys5 bears the N6-acetyllysine; alternate mark. Residue Lys5 forms a Glycyl lysine isopeptide (Lys-Gly) (interchain with G-Cter in ubiquitin); alternate linkage. Phosphotyrosine is present on Tyr6. Ser9 bears the Phosphoserine mark. Tyr14 is modified (phosphotyrosine; by ABL1). Tyr25 bears the Phosphotyrosine mark. Glycyl lysine isopeptide (Lys-Gly) (interchain with G-Cter in ubiquitin) cross-links involve residues Lys26, Lys30, Lys39, Lys47, and Lys57. Positions 82–94 (DGIWKASFTTFTV) are interaction with CAVIN3. The helical intramembrane region spans 105–125 (ALFGIPMALIWGIYFAILSFL). Topologically, residues 126–178 (HIWAVVPCIKSFLIEIQCISRVYSIYVHTFCDPLFEAIGKIFSNIRINMQKEI) are cytoplasmic. Positions 131–142 (VPCIKSFLIEIQ) are interacts with SPRY1, SPRY2, SPRY3 and SPRY4. 3 S-palmitoyl cysteine lipidation sites follow: Cys133, Cys143, and Cys156. Residues 149 to 160 (SIYVHTFCDPLF) form an interacts with SPRY1, SPRY2, and SPRY4 region. The segment at 167-178 (FSNIRINMQKEI) is interacts with SPRY1, SPRY2, SPRY3 and SPRY4.

It belongs to the caveolin family. Homooligomer. Interacts with GLIPR2. Interacts with NOSTRIN. Interacts with SNAP25 and STX1A. Interacts (via the N-terminus) with DPP4; the interaction is direct. Interacts with CTNNB1, CDH1 and JUP. Interacts with PACSIN2; this interaction induces membrane tubulation. Interacts with SLC7A9. Interacts with BMX and BTK. Interacts with TGFBR1. Interacts with CAVIN3 (via leucine-zipper domain) in a cholesterol-sensitive manner. Interacts with CAVIN1. Interacts with EHD2 in a cholesterol-dependent manner. Forms a ternary complex with UBXN6 and VCP; mediates CAV1 targeting to lysosomes for degradation. Interacts with ABCG1; this interaction regulates ABCG1-mediated cholesterol efflux. Interacts with NEU3; this interaction enhances NEU3 sialidase activity within caveola. Interacts (via C-terminus) with SPRY1, SPRY2 (via C-terminus), SPRY3, and SPRY4. Interacts with IGFBP5; this interaction allows trafficking of IGFBP5 from the plasma membrane to the nucleus. Post-translationally, phosphorylated at Tyr-14 by ABL1 in response to oxidative stress. In terms of processing, ubiquitinated. Undergo monoubiquitination and multi- and/or polyubiquitination. Monoubiquitination of N-terminal lysines promotes integration in a ternary complex with UBXN6 and VCP which promotes oligomeric CAV1 targeting to lysosomes for degradation. Ubiquitinated by ZNRF1; leading to degradation and modulation of the TLR4-mediated immune response.

It is found in the golgi apparatus membrane. It localises to the cell membrane. The protein localises to the membrane. Its subcellular location is the caveola. The protein resides in the membrane raft. May act as a scaffolding protein within caveolar membranes. Forms a stable heterooligomeric complex with CAV2 that targets to lipid rafts and drives caveolae formation. Mediates the recruitment of CAVIN proteins (CAVIN1/2/3/4) to the caveolae. Interacts directly with G-protein alpha subunits and can functionally regulate their activity. Involved in the costimulatory signal essential for T-cell receptor (TCR)-mediated T-cell activation. Its binding to DPP4 induces T-cell proliferation and NF-kappa-B activation in a T-cell receptor/CD3-dependent manner. Recruits CTNNB1 to caveolar membranes and may regulate CTNNB1-mediated signaling through the Wnt pathway. Negatively regulates TGFB1-mediated activation of SMAD2/3 by mediating the internalization of TGFBR1 from membrane rafts leading to its subsequent degradation. Binds 20(S)-hydroxycholesterol (20(S)-OHC). The polypeptide is Caveolin-1 (CAV1) (Muntiacus reevesi (Reeves' muntjac)).